The primary structure comprises 91 residues: Large ribosomal subunit protein uL23c (91 aa).

Belongs to the universal ribosomal protein uL23 family. Part of the 50S ribosomal subunit.

It localises to the plastid. Its subcellular location is the chloroplast. In terms of biological role, binds to 23S rRNA. This is Large ribosomal subunit protein uL23c (rpl23) from Chaetosphaeridium globosum (Charophycean green alga).